Reading from the N-terminus, the 1005-residue chain is Probable beta-galactosidase A (1005 aa).

The N-terminal stretch at 1-18 (MKLLSVAAVALLAAQAAG) is a signal peptide. Positions 96, 140, 141, and 142 each coordinate substrate. Asn156 carries N-linked (GlcNAc...) asparagine glycosylation. Asn199 is a substrate binding site. The Proton donor role is filled by Glu200. Cys205 and Cys206 form a disulfide bridge. Residue Tyr260 participates in substrate binding. Cys266 and Cys315 are disulfide-bonded. Glu298 (nucleophile) is an active-site residue. Tyr364 contributes to the substrate binding site. Residues Asn373, Asn402, Asn453, Asn478, Asn522, Asn622, Asn760, Asn777, Asn805, and Asn914 are each glycosylated (N-linked (GlcNAc...) asparagine).

The protein belongs to the glycosyl hydrolase 35 family.

The protein localises to the secreted. The catalysed reaction is Hydrolysis of terminal non-reducing beta-D-galactose residues in beta-D-galactosides.. Cleaves beta-linked terminal galactosyl residues from gangliosides, glycoproteins, and glycosaminoglycans. The sequence is that of Probable beta-galactosidase A (lacA) from Aspergillus flavus (strain ATCC 200026 / FGSC A1120 / IAM 13836 / NRRL 3357 / JCM 12722 / SRRC 167).